A 245-amino-acid chain; its full sequence is Octopine transport system permease protein OccM (245 aa).

Helical transmembrane passes span 12-32 (FVALLSGIPLALQLAVFSVAL), 57-77 (FYIFAFRGTPLLVQIYIIYYG), 96-116 (AYWCAMAALALNTAAYTAEIM), 163-183 (ILMVKSTSLASTITIMEITGI), and 204-224 (IYLILNFIVARLFTLLEWALW). Residues 19–216 (IPLALQLAVF…ILNFIVARLF (198 aa)) enclose the ABC transmembrane type-1 domain.

The protein belongs to the binding-protein-dependent transport system permease family. HisMQ subfamily.

Its subcellular location is the cell inner membrane. Functionally, component of the octopine active transport system probably consisting of four subunits: Q, M, P and T. This is Octopine transport system permease protein OccM (occM) from Rhizobium radiobacter (Agrobacterium tumefaciens).